The following is a 419-amino-acid chain: Zinc finger protein Pegasus (419 aa).

Residue Lys-5 forms a Glycyl lysine isopeptide (Lys-Gly) (interchain with G-Cter in SUMO2) linkage. 3 consecutive C2H2-type zinc fingers follow at residues 82–104 (LKCR…IRIH), 110–132 (HRCH…MRSH), and 138–161 (YKCE…RRKH). Lys-185 is covalently cross-linked (Glycyl lysine isopeptide (Lys-Gly) (interchain with G-Cter in SUMO2)). A compositionally biased stretch (polar residues) spans 223-236 (QTDSYESMAKTTPT). 2 disordered regions span residues 223–245 (QTDS…DPQE) and 288–356 (MQQP…PTLP). A compositionally biased stretch (low complexity) spans 289 to 311 (QQPSAQAVVSAVSASLPQSSSPA). Residues 332–349 (SEPSAHTSTPSMGNSQPS) are compositionally biased toward polar residues. 2 consecutive C2H2-type zinc fingers follow at residues 364-386 (HHCQ…MGCH) and 392-416 (FQCN…RGQH).

Belongs to the Ikaros C2H2-type zinc-finger protein family. Self-associates. Interacts with other family members; IKZF1, IKZF2, IKZF3 and IKZF4.

The protein localises to the nucleus. Transcriptional repressor that binds the core 5'GNNTGTNG-3' DNA consensus sequence. Involved in megakaryocyte differentiation. This is Zinc finger protein Pegasus (IKZF5) from Bos taurus (Bovine).